Reading from the N-terminus, the 209-residue chain is Abscisic acid receptor PYL5 (209 aa).

An START-like region spans residues 44–196 (HAPGEHQCSS…NLTSLAEVSE (153 aa)). A disulfide bond links Cys-51 and Cys-177. Residues Lys-80, 109 to 114 (ATTSTE), 136 to 142 (RLRNYSS), and Glu-161 each bind abscisate. The Gate loop signature appears at 105–109 (TGLPA). The Latch loop motif lies at 135–137 (HRL).

Belongs to the PYR/PYL/RCAR abscisic acid intracellular receptor family. In terms of assembly, monomer. Interacts with PP2C30. Binding to PP2C30 is dependent on the presence of abscisic acid (ABA). Interacts with PP2C51. Binding to PP2C51 is dependent on the presence of ABA. Interacts with PP2C50. Binding to PP2C50 is dependent on the presence of ABA. Interacts with PP2C53. As to expression, expressed in leaf sheaths and leaf blades. Expressed at low levels in roots, flowers and seeds.

The protein resides in the nucleus. The protein localises to the cytoplasm. It localises to the cytosol. In terms of biological role, intracellular abscisic acid (ABA) receptor that functions as a positive regulator of ABA signaling pathway. Together with ABI5, PP2C30 and SAPK2, is part of an ABA signaling unit that modulates seed germination and early seedling growth. Acts as a positive regulator of abiotic stress-responsive gene expression. Inhibits the protein phosphatases PP2C06 and PP2C09 when activated by ABA. The sequence is that of Abscisic acid receptor PYL5 from Oryza sativa subsp. japonica (Rice).